The sequence spans 696 residues: DNA ligase (696 aa).

NAD(+)-binding positions include 55-59 (DYEFD), 105-106 (SL), and Glu137. Lys139 functions as the N6-AMP-lysine intermediate in the catalytic mechanism. NAD(+) contacts are provided by Arg160, Glu194, Lys310, and Lys334. Cys428, Cys431, Cys446, and Cys451 together coordinate Zn(2+). Residues 615–696 (NVNPNFVGKN…EFIELKDKFD (82 aa)) enclose the BRCT domain.

It belongs to the NAD-dependent DNA ligase family. LigA subfamily. Requires Mg(2+) as cofactor. Mn(2+) serves as cofactor.

It catalyses the reaction NAD(+) + (deoxyribonucleotide)n-3'-hydroxyl + 5'-phospho-(deoxyribonucleotide)m = (deoxyribonucleotide)n+m + AMP + beta-nicotinamide D-nucleotide.. Functionally, DNA ligase that catalyzes the formation of phosphodiester linkages between 5'-phosphoryl and 3'-hydroxyl groups in double-stranded DNA using NAD as a coenzyme and as the energy source for the reaction. It is essential for DNA replication and repair of damaged DNA. The polypeptide is DNA ligase (Fusobacterium nucleatum subsp. nucleatum (strain ATCC 25586 / DSM 15643 / BCRC 10681 / CIP 101130 / JCM 8532 / KCTC 2640 / LMG 13131 / VPI 4355)).